Here is a 296-residue protein sequence, read N- to C-terminus: MANQLKTVLLLGVLTGLFLAIGHLVAGKQGMIIAFVVALFMNFFSYFFSDKVALAMYGAREIMYEEAPWLHEMVEDLAKRAGIPKPKIYLAPIAVPNAFATGRDPNHAAVAVTSGILQILDKDELRGVLAHELGHVKNRDILISSIAATIGGAISMLANMAYYTAFLGGNDRENNNPIASIIGSIILFIVAPLAATLIQMAISRSREFVADEAGAKISGCPLCLANALRRLEEIAHNPQIQEIASQEINPGTAHMMIVNPLSGDFIMKLFSTHPPTEERIRRLEELARKMQPGYGF.

Transmembrane regions (helical) follow at residues 7–27 (TVLL…LVAG) and 29–49 (QGMI…YFFS). Residue His131 participates in Zn(2+) binding. The active site involves Glu132. His135 is a binding site for Zn(2+). The next 2 membrane-spanning stretches (helical) occupy residues 141 to 161 (ILIS…ANMA) and 178 to 198 (IASI…ATLI). Glu207 is a Zn(2+) binding site.

The protein belongs to the peptidase M48B family. The cofactor is Zn(2+).

The protein resides in the cell inner membrane. This chain is Protease HtpX homolog, found in Sulfurihydrogenibium sp. (strain YO3AOP1).